Consider the following 236-residue polypeptide: Uridylate kinase (236 aa).

10 to 13 lines the ATP pocket; the sequence is KLSG. Glycine 52 is a UMP binding site. ATP-binding residues include glycine 53 and arginine 57. Residues aspartate 72 and 133–140 contribute to the UMP site; that span reads TGNPFFTT. Residues threonine 160, tyrosine 166, and aspartate 169 each coordinate ATP.

This sequence belongs to the UMP kinase family. In terms of assembly, homohexamer.

Its subcellular location is the cytoplasm. The catalysed reaction is UMP + ATP = UDP + ADP. The protein operates within pyrimidine metabolism; CTP biosynthesis via de novo pathway; UDP from UMP (UMPK route): step 1/1. Its activity is regulated as follows. Inhibited by UTP. Its function is as follows. Catalyzes the reversible phosphorylation of UMP to UDP. This is Uridylate kinase from Phocaeicola vulgatus (strain ATCC 8482 / DSM 1447 / JCM 5826 / CCUG 4940 / NBRC 14291 / NCTC 11154) (Bacteroides vulgatus).